The primary structure comprises 292 residues: 4-hydroxy-tetrahydrodipicolinate synthase (292 aa).

Threonine 45 contacts pyruvate. Catalysis depends on tyrosine 133, which acts as the Proton donor/acceptor. The active-site Schiff-base intermediate with substrate is lysine 161. Isoleucine 203 is a pyruvate binding site.

This sequence belongs to the DapA family. As to quaternary structure, homotetramer; dimer of dimers.

It is found in the cytoplasm. The catalysed reaction is L-aspartate 4-semialdehyde + pyruvate = (2S,4S)-4-hydroxy-2,3,4,5-tetrahydrodipicolinate + H2O + H(+). It functions in the pathway amino-acid biosynthesis; L-lysine biosynthesis via DAP pathway; (S)-tetrahydrodipicolinate from L-aspartate: step 3/4. Its function is as follows. Catalyzes the condensation of (S)-aspartate-beta-semialdehyde [(S)-ASA] and pyruvate to 4-hydroxy-tetrahydrodipicolinate (HTPA). This is 4-hydroxy-tetrahydrodipicolinate synthase from Vibrio vulnificus (strain YJ016).